A 432-amino-acid polypeptide reads, in one-letter code: Enolase (432 aa).

A (2R)-2-phosphoglycerate-binding site is contributed by Gln167. The active-site Proton donor is Glu209. Residues Asp246, Glu290, and Asp317 each coordinate Mg(2+). Residues Lys342, Arg371, Ser372, and Lys393 each coordinate (2R)-2-phosphoglycerate. Lys342 serves as the catalytic Proton acceptor.

Belongs to the enolase family. In terms of assembly, component of the RNA degradosome, a multiprotein complex involved in RNA processing and mRNA degradation. Mg(2+) is required as a cofactor.

It localises to the cytoplasm. The protein resides in the secreted. It is found in the cell surface. The catalysed reaction is (2R)-2-phosphoglycerate = phosphoenolpyruvate + H2O. Its pathway is carbohydrate degradation; glycolysis; pyruvate from D-glyceraldehyde 3-phosphate: step 4/5. Functionally, catalyzes the reversible conversion of 2-phosphoglycerate (2-PG) into phosphoenolpyruvate (PEP). It is essential for the degradation of carbohydrates via glycolysis. This is Enolase from Salmonella agona (strain SL483).